Consider the following 95-residue polypeptide: Aspartyl/glutamyl-tRNA(Asn/Gln) amidotransferase subunit C (95 aa).

This sequence belongs to the GatC family. In terms of assembly, heterotrimer of A, B and C subunits.

It catalyses the reaction L-glutamyl-tRNA(Gln) + L-glutamine + ATP + H2O = L-glutaminyl-tRNA(Gln) + L-glutamate + ADP + phosphate + H(+). The enzyme catalyses L-aspartyl-tRNA(Asn) + L-glutamine + ATP + H2O = L-asparaginyl-tRNA(Asn) + L-glutamate + ADP + phosphate + 2 H(+). Its function is as follows. Allows the formation of correctly charged Asn-tRNA(Asn) or Gln-tRNA(Gln) through the transamidation of misacylated Asp-tRNA(Asn) or Glu-tRNA(Gln) in organisms which lack either or both of asparaginyl-tRNA or glutaminyl-tRNA synthetases. The reaction takes place in the presence of glutamine and ATP through an activated phospho-Asp-tRNA(Asn) or phospho-Glu-tRNA(Gln). The protein is Aspartyl/glutamyl-tRNA(Asn/Gln) amidotransferase subunit C of Cereibacter sphaeroides (strain ATCC 17023 / DSM 158 / JCM 6121 / CCUG 31486 / LMG 2827 / NBRC 12203 / NCIMB 8253 / ATH 2.4.1.) (Rhodobacter sphaeroides).